The following is a 648-amino-acid chain: Pesticidal crystal protein Cry19Aa (648 aa).

The protein belongs to the delta endotoxin family.

Promotes colloidosmotic lysis by binding to the midgut epithelial cells of mosquitos. The sequence is that of Pesticidal crystal protein Cry19Aa (cry19Aa) from Bacillus thuringiensis subsp. jegathesan.